The primary structure comprises 221 residues: UPF0758 protein ECA0145 (221 aa).

In terms of domain architecture, MPN spans 99–221 (AMLNPEATGQ…FVSFAERGWI (123 aa)). The Zn(2+) site is built by His170, His172, and Asp183. Positions 170-183 (HNHPSGKAEPSQAD) match the JAMM motif motif.

It belongs to the UPF0758 family. YicR subfamily.

The polypeptide is UPF0758 protein ECA0145 (Pectobacterium atrosepticum (strain SCRI 1043 / ATCC BAA-672) (Erwinia carotovora subsp. atroseptica)).